Consider the following 316-residue polypeptide: Small ribosomal subunit protein mS26 (316 aa).

The disordered stretch occupies residues 41–71 (TTRSARDSVSIPPDSPNYIKVPEPPQSSEVR).

Belongs to the mitochondrion-specific ribosomal protein mS26 family. Component of the mitochondrial small ribosomal subunit (mt-SSU). Mature N.crassa 74S mitochondrial ribosomes consist of a small (37S) and a large (54S) subunit. The 37S small subunit contains a 16S ribosomal RNA (16S mt-rRNA) and 32 different proteins. The 54S large subunit contains a 23S rRNA (23S mt-rRNA) and 42 different proteins.

It localises to the mitochondrion. Component of the mitochondrial ribosome (mitoribosome), a dedicated translation machinery responsible for the synthesis of mitochondrial genome-encoded proteins, including at least some of the essential transmembrane subunits of the mitochondrial respiratory chain. The mitoribosomes are attached to the mitochondrial inner membrane and translation products are cotranslationally integrated into the membrane. This chain is Small ribosomal subunit protein mS26 (pet123), found in Neurospora crassa (strain ATCC 24698 / 74-OR23-1A / CBS 708.71 / DSM 1257 / FGSC 987).